A 172-amino-acid chain; its full sequence is MQNKPSSYDREDLLASSRGELFGPNGPQLPAPNMLMMDRIPLMSETEGLFGKGKVIAELDITPDLWFFDCHFPGDPVMPGCLGLDAMWQLVGFFLGWVGGQGKGRALGVGEVKFTGQVLPTAKKVTYEIDFKRVINRKLVMGLADGRVLVDGKEIYVAKDLKVGLFQDTSAF.

His-71 is a catalytic residue.

Belongs to the thioester dehydratase family. FabA subfamily. As to quaternary structure, homodimer.

It localises to the cytoplasm. The enzyme catalyses a (3R)-hydroxyacyl-[ACP] = a (2E)-enoyl-[ACP] + H2O. It catalyses the reaction (3R)-hydroxydecanoyl-[ACP] = (2E)-decenoyl-[ACP] + H2O. It carries out the reaction (2E)-decenoyl-[ACP] = (3Z)-decenoyl-[ACP]. It participates in lipid metabolism; fatty acid biosynthesis. Its function is as follows. Necessary for the introduction of cis unsaturation into fatty acids. Catalyzes the dehydration of (3R)-3-hydroxydecanoyl-ACP to E-(2)-decenoyl-ACP and then its isomerization to Z-(3)-decenoyl-ACP. Can catalyze the dehydratase reaction for beta-hydroxyacyl-ACPs with saturated chain lengths up to 16:0, being most active on intermediate chain length. This is 3-hydroxydecanoyl-[acyl-carrier-protein] dehydratase from Aliivibrio salmonicida (strain LFI1238) (Vibrio salmonicida (strain LFI1238)).